A 159-amino-acid chain; its full sequence is Ribosomal RNA large subunit methyltransferase H (159 aa).

S-adenosyl-L-methionine-binding positions include leucine 76, glycine 108, and 127–132 (LSRLTF).

This sequence belongs to the RNA methyltransferase RlmH family. As to quaternary structure, homodimer.

Its subcellular location is the cytoplasm. The enzyme catalyses pseudouridine(1915) in 23S rRNA + S-adenosyl-L-methionine = N(3)-methylpseudouridine(1915) in 23S rRNA + S-adenosyl-L-homocysteine + H(+). Functionally, specifically methylates the pseudouridine at position 1915 (m3Psi1915) in 23S rRNA. This is Ribosomal RNA large subunit methyltransferase H from Syntrophomonas wolfei subsp. wolfei (strain DSM 2245B / Goettingen).